The chain runs to 215 residues: NADH-quinone oxidoreductase subunit C (215 aa).

It belongs to the complex I 30 kDa subunit family. As to quaternary structure, NDH-1 is composed of 14 different subunits. Subunits NuoB, C, D, E, F, and G constitute the peripheral sector of the complex.

It is found in the cell inner membrane. The enzyme catalyses a quinone + NADH + 5 H(+)(in) = a quinol + NAD(+) + 4 H(+)(out). Functionally, NDH-1 shuttles electrons from NADH, via FMN and iron-sulfur (Fe-S) centers, to quinones in the respiratory chain. The immediate electron acceptor for the enzyme in this species is believed to be ubiquinone. Couples the redox reaction to proton translocation (for every two electrons transferred, four hydrogen ions are translocated across the cytoplasmic membrane), and thus conserves the redox energy in a proton gradient. The protein is NADH-quinone oxidoreductase subunit C of Francisella philomiragia subsp. philomiragia (strain ATCC 25017 / CCUG 19701 / FSC 153 / O#319-036).